A 206-amino-acid polypeptide reads, in one-letter code: Potassium-transporting ATPase KdpC subunit (206 aa).

Residues 14-34 (VLAVFTLFGLGLAYSLIATGI) traverse the membrane as a helical segment.

Belongs to the KdpC family. The system is composed of three essential subunits: KdpA, KdpB and KdpC.

It is found in the cell inner membrane. Part of the high-affinity ATP-driven potassium transport (or Kdp) system, which catalyzes the hydrolysis of ATP coupled with the electrogenic transport of potassium into the cytoplasm. This subunit acts as a catalytic chaperone that increases the ATP-binding affinity of the ATP-hydrolyzing subunit KdpB by the formation of a transient KdpB/KdpC/ATP ternary complex. This chain is Potassium-transporting ATPase KdpC subunit, found in Xanthomonas axonopodis pv. citri (strain 306).